The primary structure comprises 166 residues: Protein TIFY 11e (166 aa).

One can recognise a Tify domain in the interval 65–100; that stretch reads ASSAAAQMTIFYGGRVLVLDECPADRAAALLRLAAS. Residues 123–148 carry the Jas motif; that stretch reads PVARKASLQRFMEKRKGRLAARGQPY. The Nuclear localization signal signature appears at 125–132; that stretch reads ARKASLQR.

It belongs to the TIFY/JAZ family. Ubiquitinated. Targeted for degradation by the SCF(COI1) E3 ubiquitin ligase-proteasome pathway during jasmonate signaling.

The protein localises to the nucleus. Repressor of jasmonate responses. In Oryza sativa subsp. japonica (Rice), this protein is Protein TIFY 11e.